The chain runs to 400 residues: Ubiquitin-like modifier-activating enzyme 5 (400 aa).

Positions 76, 97, 120, 143, and 177 each coordinate ATP. 2 residues coordinate Zn(2+): cysteine 219 and cysteine 222. The active-site Glycyl thioester intermediate is the cysteine 243. 2 residues coordinate Zn(2+): cysteine 296 and cysteine 301.

It belongs to the ubiquitin-activating E1 family. UBA5 subfamily.

E1-like enzyme which activates UFM1. This Drosophila virilis (Fruit fly) protein is Ubiquitin-like modifier-activating enzyme 5.